The primary structure comprises 185 residues: Elongation factor P (185 aa).

Belongs to the elongation factor P family.

It is found in the cytoplasm. It functions in the pathway protein biosynthesis; polypeptide chain elongation. Involved in peptide bond synthesis. Stimulates efficient translation and peptide-bond synthesis on native or reconstituted 70S ribosomes in vitro. Probably functions indirectly by altering the affinity of the ribosome for aminoacyl-tRNA, thus increasing their reactivity as acceptors for peptidyl transferase. This Dictyoglomus turgidum (strain DSM 6724 / Z-1310) protein is Elongation factor P.